A 337-amino-acid chain; its full sequence is Quinolinate synthase (337 aa).

Iminosuccinate-binding residues include histidine 40 and serine 57. Cysteine 102 contacts [4Fe-4S] cluster. Residues 128–130 (YVN) and serine 145 contribute to the iminosuccinate site. Residue cysteine 189 participates in [4Fe-4S] cluster binding. Residues 215–217 (HPE) and threonine 243 contribute to the iminosuccinate site. Cysteine 288 contacts [4Fe-4S] cluster.

The protein belongs to the quinolinate synthase family. Type 2 subfamily. [4Fe-4S] cluster serves as cofactor.

It is found in the cytoplasm. The catalysed reaction is iminosuccinate + dihydroxyacetone phosphate = quinolinate + phosphate + 2 H2O + H(+). It functions in the pathway cofactor biosynthesis; NAD(+) biosynthesis; quinolinate from iminoaspartate: step 1/1. Its function is as follows. Catalyzes the condensation of iminoaspartate with dihydroxyacetone phosphate to form quinolinate. This Mycobacterium sp. (strain JLS) protein is Quinolinate synthase.